The sequence spans 159 residues: UPF0225 protein plu2503 (159 aa).

Belongs to the UPF0225 family.

This is UPF0225 protein plu2503 from Photorhabdus laumondii subsp. laumondii (strain DSM 15139 / CIP 105565 / TT01) (Photorhabdus luminescens subsp. laumondii).